Here is a 302-residue protein sequence, read N- to C-terminus: Glutaminase (302 aa).

Substrate-binding residues include Ser61, Asn111, Glu155, Asn162, Tyr186, Tyr238, and Val256.

The protein belongs to the glutaminase family. In terms of assembly, homotetramer.

It carries out the reaction L-glutamine + H2O = L-glutamate + NH4(+). The polypeptide is Glutaminase (Pseudomonas savastanoi pv. phaseolicola (strain 1448A / Race 6) (Pseudomonas syringae pv. phaseolicola (strain 1448A / Race 6))).